The primary structure comprises 156 residues: Ribosomal RNA large subunit methyltransferase H (156 aa).

S-adenosyl-L-methionine contacts are provided by residues Leu-73, Gly-104, and 123–128 (LSKLTL).

The protein belongs to the RNA methyltransferase RlmH family. As to quaternary structure, homodimer.

The protein localises to the cytoplasm. It carries out the reaction pseudouridine(1915) in 23S rRNA + S-adenosyl-L-methionine = N(3)-methylpseudouridine(1915) in 23S rRNA + S-adenosyl-L-homocysteine + H(+). Specifically methylates the pseudouridine at position 1915 (m3Psi1915) in 23S rRNA. This chain is Ribosomal RNA large subunit methyltransferase H, found in Idiomarina loihiensis (strain ATCC BAA-735 / DSM 15497 / L2-TR).